We begin with the raw amino-acid sequence, 34 residues long: Photosystem II reaction center protein M (34 aa).

The chain crosses the membrane as a helical span at residues 5–25 (ILAFIATALFILVPTAFLLII).

Belongs to the PsbM family. PSII is composed of 1 copy each of membrane proteins PsbA, PsbB, PsbC, PsbD, PsbE, PsbF, PsbH, PsbI, PsbJ, PsbK, PsbL, PsbM, PsbT, PsbX, PsbY, PsbZ, Psb30/Ycf12, at least 3 peripheral proteins of the oxygen-evolving complex and a large number of cofactors. It forms dimeric complexes.

It is found in the plastid. The protein localises to the chloroplast thylakoid membrane. In terms of biological role, one of the components of the core complex of photosystem II (PSII). PSII is a light-driven water:plastoquinone oxidoreductase that uses light energy to abstract electrons from H(2)O, generating O(2) and a proton gradient subsequently used for ATP formation. It consists of a core antenna complex that captures photons, and an electron transfer chain that converts photonic excitation into a charge separation. This subunit is found at the monomer-monomer interface. This chain is Photosystem II reaction center protein M, found in Coffea arabica (Arabian coffee).